The sequence spans 176 residues: NAD(P)H-quinone oxidoreductase subunit 6, chloroplastic (176 aa).

Transmembrane regions (helical) follow at residues 10-30 (FLLVFLGSGLLFGSLGVVLFP), 32-52 (PIFSAFSLGFVLVCISLLYIL), 61-81 (AQLLIYVGAITVLIIFAVMFM), 95-115 (VGDGITSVICTTILFSLISTI), and 152-172 (FFLPFELISIILLVALIGAIS).

Belongs to the complex I subunit 6 family. NDH is composed of at least 16 different subunits, 5 of which are encoded in the nucleus.

It is found in the plastid. The protein localises to the chloroplast thylakoid membrane. It carries out the reaction a plastoquinone + NADH + (n+1) H(+)(in) = a plastoquinol + NAD(+) + n H(+)(out). The catalysed reaction is a plastoquinone + NADPH + (n+1) H(+)(in) = a plastoquinol + NADP(+) + n H(+)(out). NDH shuttles electrons from NAD(P)H:plastoquinone, via FMN and iron-sulfur (Fe-S) centers, to quinones in the photosynthetic chain and possibly in a chloroplast respiratory chain. The immediate electron acceptor for the enzyme in this species is believed to be plastoquinone. Couples the redox reaction to proton translocation, and thus conserves the redox energy in a proton gradient. This chain is NAD(P)H-quinone oxidoreductase subunit 6, chloroplastic (ndhG), found in Aethionema cordifolium (Lebanon stonecress).